The following is a 477-amino-acid chain: Peroxisome proliferator-activated receptor gamma (477 aa).

Ser-87 is subject to Phosphoserine; by MAPK. A DNA-binding region (nuclear receptor) is located at residues 110–184; the sequence is AIECRVCGDK…VGMSHNAIRF (75 aa). NR C4-type zinc fingers lie at residues 113–133 and 150–172; these read CRVCGDKASGFHYGVHACEGC and CDLNCRIHKKSRNKCQFCRFQKC. The disordered stretch occupies residues 231–281; sequence TKAKAPGHPDGQSHRQNSRGYTRHELADDGGGSDQGAVREPRAEQGGGDSN. The 224-residue stretch at 252 to 475 folds into the NR LBD domain; the sequence is TRHELADDGG…HPLLQEIYKD (224 aa). The 9aaTAD motif lies at 467–475; it reads PLLQEIYKD.

It belongs to the nuclear hormone receptor family. NR1 subfamily. As to quaternary structure, heterodimer with the retinoid X receptor. In terms of tissue distribution, expressed mainly in adipose tissue and kidney.

The protein localises to the nucleus. The protein resides in the cytoplasm. Its function is as follows. Receptor that binds peroxisome proliferators such as hypolipidemic drugs and fatty acids. Once activated by a ligand, the receptor binds to a promoter element in the gene for acyl-CoA oxidase and activates its transcription. It therefore controls the peroxisomal beta-oxidation pathway of fatty acids. Key regulator of adipocyte differentiation and glucose homeostasis. May play a role in the regulation of circadian rhythm. This Xenopus laevis (African clawed frog) protein is Peroxisome proliferator-activated receptor gamma (pparg).